The chain runs to 1890 residues: DNA polymerase zeta catalytic subunit (1890 aa).

Polar residues-rich tracts occupy residues 508-533 (QENLPDFGSSTKRALPSNPDSQNLRT) and 549-560 (PDSSTSNGASEN). Disordered stretches follow at residues 508-565 (QENL…FRRY) and 922-942 (GDSNIDSEKQPLRDNHNDRGA). Residues 922-940 (GDSNIDSEKQPLRDNHNDR) show a composition bias toward basic and acidic residues. Zn(2+) is bound by residues Cys1789, Cys1792, Cys1803, and Cys1806. Residues 1789 to 1806 (CILCGEVVQESAQLCNRC) form a CysA-type zinc finger. Cys1835, Cys1838, Cys1851, and Cys1856 together coordinate [4Fe-4S] cluster. The CysB motif motif lies at 1835–1856 (CRHCGGGDWVVQSGVKCNSLAC).

The protein belongs to the DNA polymerase type-B family. As to quaternary structure, forms DNA polymerase zeta with REV7. It depends on [4Fe-4S] cluster as a cofactor. In terms of tissue distribution, expressed in roots, leaves and flowers.

The protein localises to the nucleus. The catalysed reaction is DNA(n) + a 2'-deoxyribonucleoside 5'-triphosphate = DNA(n+1) + diphosphate. Functionally, catalytic subunit of the error prone DNA polymerase zeta. Involved in damage-tolerance mechanisms through translesion DNA synthesis. In Arabidopsis thaliana (Mouse-ear cress), this protein is DNA polymerase zeta catalytic subunit (REV3).